A 204-amino-acid polypeptide reads, in one-letter code: MRLRKTRKIVVSMKDMAASGGYYIASSADKIFALSGTITGSIGVLQWLRYQRAFGSLGVKMRTYKEGKYKDSLSLFRDSTPEEDEMIQKMLSDTYNEFVQDVAKGRNQTVKSVQNLAEGRIYSGQDAFRNKLVDEIGGRKEALEELSRLCQYDGEIPLYEEEESPFDRLFMMLGSKMNSFSSERIFFREFKNSPVLVILPQAIR.

A signal peptide spans Met1–Ser27. Residue Ser19 is the Nucleophile of the active site. Lys70 acts as the Proton donor/acceptor in catalysis.

The protein belongs to the peptidase S49 family.

In terms of biological role, possible protease. May be involved in export of periplasmic flagella proteins. In Leptospira borgpetersenii, this protein is Putative peptidase PfaP (pfaP).